Here is a 321-residue protein sequence, read N- to C-terminus: tRNA uridine(34) hydroxylase (321 aa).

The Rhodanese domain maps to 135–233 (DDPDTLVIDT…YLEQVPEEES (99 aa)). Residue cysteine 193 is the Cysteine persulfide intermediate of the active site. The interval 301–321 (RQRQMDQLSSASSKKSDDFSL) is disordered.

The protein belongs to the TrhO family.

It catalyses the reaction uridine(34) in tRNA + AH2 + O2 = 5-hydroxyuridine(34) in tRNA + A + H2O. Functionally, catalyzes oxygen-dependent 5-hydroxyuridine (ho5U) modification at position 34 in tRNAs. The sequence is that of tRNA uridine(34) hydroxylase from Parasynechococcus marenigrum (strain WH8102).